A 237-amino-acid polypeptide reads, in one-letter code: Phosphoribosylaminoimidazole-succinocarboxamide synthase (237 aa).

It belongs to the SAICAR synthetase family.

It carries out the reaction 5-amino-1-(5-phospho-D-ribosyl)imidazole-4-carboxylate + L-aspartate + ATP = (2S)-2-[5-amino-1-(5-phospho-beta-D-ribosyl)imidazole-4-carboxamido]succinate + ADP + phosphate + 2 H(+). It functions in the pathway purine metabolism; IMP biosynthesis via de novo pathway; 5-amino-1-(5-phospho-D-ribosyl)imidazole-4-carboxamide from 5-amino-1-(5-phospho-D-ribosyl)imidazole-4-carboxylate: step 1/2. The polypeptide is Phosphoribosylaminoimidazole-succinocarboxamide synthase (Yersinia pseudotuberculosis serotype O:1b (strain IP 31758)).